Consider the following 555-residue polypeptide: Transmembrane protein 87B (555 aa).

An N-terminal signal peptide occupies residues 1 to 42; that stretch reads MAAACRSEAGLLPSLLCRRPAGAQLLRVALCLLCWVPAAVDA. Topologically, residues 43–216 are lumenal; it reads VPELGLWTRT…HGYISASDWP (174 aa). N-linked (GlcNAc...) asparagine glycosylation is found at Asn68, Asn160, and Asn198. The chain crosses the membrane as a helical span at residues 217–237; it reads LMIFYMVMCIVYILYGVLWLL. The Cytoplasmic segment spans residues 238-248; it reads WSACYWKDILR. A helical membrane pass occupies residues 249–269; the sequence is IQFWIAAVIFLGMLEKAVFYS. At 270-300 the chain is on the lumenal side; it reads EYQNINSTGLSTQGLLIFAELISAVKRTLAR. The N-linked (GlcNAc...) asparagine glycan is linked to Asn275. A helical membrane pass occupies residues 301 to 321; it reads LLVIIVSLGYGIVKPRLGTVM. Over 322-323 the chain is Cytoplasmic; that stretch reads HR. A helical transmembrane segment spans residues 324–344; sequence VIGLGLLYLIFAAIEGVMRVI. Topologically, residues 345-351 are lumenal; the sequence is GGSKHLA. A helical transmembrane segment spans residues 352-372; that stretch reads VVLTDIVLAVIDSIFVWFIFI. The Cytoplasmic segment spans residues 373–394; that stretch reads SLAQTMKTLRLRKNTVKFSLYR. A helical transmembrane segment spans residues 395 to 415; the sequence is HFTNTLIFAVLASIVFMVWTT. Residues 416–429 lie on the Lumenal side of the membrane; the sequence is KTFRIAKCQSDWME. Residues 430–450 form a helical membrane-spanning segment; that stretch reads LWVDDAFWSFLFSVILIVIMF. Residues 451 to 555 lie on the Cytoplasmic side of the membrane; it reads LWRPSANNQR…EKMFSSEKIM (105 aa). Phosphoserine occurs at positions 470, 497, and 534.

The protein belongs to the LU7TM family. TMEM87 subfamily.

It is found in the golgi apparatus membrane. Its function is as follows. May be involved in retrograde transport from endosomes to the trans-Golgi network (TGN). This is Transmembrane protein 87B from Mus musculus (Mouse).